We begin with the raw amino-acid sequence, 441 residues long: Matrix extracellular phosphoglycoprotein (441 aa).

Residues 1-24 (MTPEGLMKMQAVSVGLLLFSMTWA) form the signal peptide. N-linked (GlcNAc...) asparagine glycosylation is present at Asn82. Positions 137-441 (QSSPVKSKHT…SGSSSESHGD (305 aa)) are disordered. The span at 142 to 156 (KSKHTKHTRQTRRST) shows a compositional bias: basic residues. A dentonin region spans residues 178 to 200 (PDLLVRGDNDVPPFSGDGQHFMH). A Cell attachment site motif is present at residues 183-185 (RGD). A glycan (O-linked (Xyl...) (chondroitin sulfate) serine) is linked at Ser192. Residues 211-223 (PESSTSRPLSGSS) are compositionally biased toward polar residues. The segment covering 313–325 (SREKVKGGVEHAG) has biased composition (basic and acidic residues). Composition is skewed to polar residues over residues 349–358 (GNQLTLTASQ) and 391–405 (GQNN…SQRR). The tract at residues 424–441 (RDSSESSSSGSSSESHGD) is ASARM motif; interaction with PHEX. Low complexity predominate over residues 428 to 441 (ESSSSGSSSESHGD).

This sequence belongs to the PF07175/osteoregulin family. In terms of assembly, interacts (via ASARM motif) with PHEX; the interaction is zinc-dependent. Phosphorylated on serine residues in the ASARM motif; the phosphorylation is important for the inhibition of bone mineralization. Post-translationally, cleaved by CTSB/cathepsin B; the cleavage is blocked by metalloprotease PHEX. Expressed in osteocytes (at protein level). Expressed by chondrocytes, specifically in the hypertrophic zone of the bone growth plate (at protein level). Expressed in osteoblasts in bone (at protein level). Expressed by osteoblasts within the metaphysis (at protein level). Expressed at low levels in white fat, brown fat, testes, brain and aorta. Expressed in the craniofacial complex (at protein level). Expressed in odontoblasts, ameloblasts and in predentin during tooth development (at protein level). Expressed in the kidney (at protein level). Expressed in osteocytes in mandibular condylar cartilage and tibial cartilage (at protein level). Expressed in salivary glands.

The protein resides in the secreted. It is found in the extracellular space. It localises to the extracellular matrix. Regulates renal phosphate and uric acid excretion. Regulates bone mineralization by osteoblasts and cartilage mineralization by chondrocytes. Regulates the mineralization of the extracellular matrix of the craniofacial complex, such as teeth, bone and cartilage. Increases dental pulp stem cell proliferation. In Mus musculus (Mouse), this protein is Matrix extracellular phosphoglycoprotein.